The chain runs to 273 residues: NAD-dependent protein deacylase (273 aa).

Residues 1–269 enclose the Deacetylase sirtuin-type domain; sequence MNLDNAIHEA…PRIVEQVKKI (269 aa). Residues 25–44 and 107–110 contribute to the NAD(+) site; these read GAGVSAESGIPTFRDPGGVW and QNID. H125 (proton acceptor) is an active-site residue. The Zn(2+) site is built by C133, C136, C173, and C176. NAD(+) contacts are provided by residues 211–213, 237–239, and T255; these read GTS and NPN.

It belongs to the sirtuin family. Class III subfamily. It depends on Zn(2+) as a cofactor.

Its subcellular location is the cytoplasm. The enzyme catalyses N(6)-acetyl-L-lysyl-[protein] + NAD(+) + H2O = 2''-O-acetyl-ADP-D-ribose + nicotinamide + L-lysyl-[protein]. Its function is as follows. NAD-dependent protein deacetylase which modulates the activities of several proteins which are inactive in their acetylated form. This Desulfosudis oleivorans (strain DSM 6200 / JCM 39069 / Hxd3) (Desulfococcus oleovorans) protein is NAD-dependent protein deacylase (cobB).